Reading from the N-terminus, the 288-residue chain is ATP synthase gamma chain (288 aa).

This sequence belongs to the ATPase gamma chain family. F-type ATPases have 2 components, CF(1) - the catalytic core - and CF(0) - the membrane proton channel. CF(1) has five subunits: alpha(3), beta(3), gamma(1), delta(1), epsilon(1). CF(0) has three main subunits: a, b and c.

The protein localises to the cell inner membrane. Produces ATP from ADP in the presence of a proton gradient across the membrane. The gamma chain is believed to be important in regulating ATPase activity and the flow of protons through the CF(0) complex. This Vesicomyosocius okutanii subsp. Calyptogena okutanii (strain HA) protein is ATP synthase gamma chain.